A 519-amino-acid polypeptide reads, in one-letter code: Cyclic AMP-responsive element-binding protein 3-like protein 1 (519 aa).

The interval Met-1–Asp-60 is required for transcription activation. The Cytoplasmic segment spans residues Met-1 to Leu-376. A Glycyl lysine isopeptide (Lys-Gly) (interchain with G-Cter in SUMO2) cross-link involves residue Lys-184. The tract at residues Asp-200 to Pro-259 is disordered. Residues Ser-210–Arg-223 show a composition bias toward low complexity. Over residues Arg-236–Leu-246 the composition is skewed to polar residues. The region spanning Ala-290–Leu-353 is the bZIP domain. Residues Lys-292 to Lys-321 are basic motif. The tract at residues Leu-332–Leu-353 is leucine-zipper. A helical; Signal-anchor for type II membrane protein transmembrane segment spans residues Met-377–Phe-397. Positions Pro-392–Pro-395 match the S2P recognition motif. Residues Ser-398–Ser-519 are Lumenal-facing. An S1P recognition motif is present at residues Arg-423–Leu-426. The tract at residues Glu-449 to Ser-519 is disordered. A compositionally biased stretch (basic and acidic residues) spans Arg-462–Trp-486. Asn-493, Asn-498, and Asn-513 each carry an N-linked (GlcNAc...) asparagine glycan.

It belongs to the bZIP family. ATF subfamily. Interacts with SMAD4, the interaction takes place upon TGFB1 induction and SMAD4 acts as a CREB3L1 coactivator to induce the expression of genes involved in assembly of collagen extracellular matrix. Post-translationally, N-glycosylated. Ubiquitinated by HRD1/SYVN1; undergoes 'Lys-48'-linked ubiquitination, followed by rapid proteasomal degradation under normal conditions. Upon ER stress, SYVN1 E3 ubiquitin-protein ligase dissociates from its substrate, ubiquitination does not occur and CREB3L1 is stabilized. In terms of processing, upon ER stress or DNA damage, translocated to the Golgi apparatus, where it is processed by regulated intramembrane proteolysis (RIP) to release the cytosol-facing N-terminal transcription factor domain. The cleavage is performed sequentially by site-1 and site-2 proteases (S1P/MBTPS1 and S2P/MBTPS2). RIP is induced by TGFB1 and ceramide. In terms of tissue distribution, expressed in cortical and trabecular bones. Highly expressed in osteoblasts, but not detected in osteoclasts, nor in macrophages. Expressed at relatively low levels in lung and kidney. Weakly expressed in brain and spleen. Expressed in astrocytes.

The protein localises to the endoplasmic reticulum membrane. Its subcellular location is the nucleus. In terms of biological role, precursor of the transcription factor form (Processed cyclic AMP-responsive element-binding protein 3-like protein 1), which is embedded in the endoplasmic reticulum membrane with N-terminal DNA-binding and transcription activation domains oriented toward the cytosolic face of the membrane. In response to ER stress or DNA damage, transported to the Golgi, where it is cleaved in a site-specific manner by resident proteases S1P/MBTPS1 and S2P/MBTPS2. The released N-terminal cytosolic domain is translocated to the nucleus where it activates transcription of specific target genes involved in the cell-cycle progression inhibition. Its function is as follows. Transcription factor involved in cell type specific DNA damage and unfolded protein response (UPR). Binds the DNA consensus sequence 5'-GTGXGCXGC-3'. Plays a critical role in bone formation through the transcription of COL1A1, and possibly COL1A2, and the secretion of bone matrix proteins. Directly binds to the UPR element (UPRE)-like sequence in an osteoblast-specific COL1A1 promoter region and induces its transcription. Does not regulate COL1A1 in other tissues, such as skin. Required to protect astrocytes from ER stress-induced cell death. In astrocytes, binds to the cAMP response element (CRE) of the BiP/HSPA5 promoter and participate in its transcriptional activation. In astrocytes and osteoblasts, upon DNA damage, inhibits cell-cycle progression after G2/M phase by binding to promoters and activating transcription of genes encoding cell-cycle inhibitors, such as p21/CDKN1A. Required for TGFB1 to activate genes involved in the assembly of collagen extracellular matrix. This is Cyclic AMP-responsive element-binding protein 3-like protein 1 (Creb3l1) from Mus musculus (Mouse).